The sequence spans 337 residues: Ornithine carbamoyltransferase (337 aa).

Carbamoyl phosphate contacts are provided by residues 57–60 (STRT), Q84, R108, and 135–138 (HPTQ). L-ornithine-binding positions include N167, D231, and 235 to 236 (SM). Residues 272 to 273 (CL) and R317 contribute to the carbamoyl phosphate site.

This sequence belongs to the aspartate/ornithine carbamoyltransferase superfamily. OTCase family.

It localises to the cytoplasm. It catalyses the reaction carbamoyl phosphate + L-ornithine = L-citrulline + phosphate + H(+). It participates in amino-acid degradation; L-arginine degradation via ADI pathway; carbamoyl phosphate from L-arginine: step 2/2. In terms of biological role, reversibly catalyzes the transfer of the carbamoyl group from carbamoyl phosphate (CP) to the N(epsilon) atom of ornithine (ORN) to produce L-citrulline. This Streptococcus uberis (strain ATCC BAA-854 / 0140J) protein is Ornithine carbamoyltransferase.